Consider the following 520-residue polypeptide: mRNA-capping enzyme subunit beta (520 aa).

The tract at residues 1–185 (MNVGSILNDD…PQPVFDDQDD (185 aa)) is disordered. Composition is skewed to polar residues over residues 11-21 (PPSSGNANGND) and 44-56 (ITSMLNDTPSDST). Positions 92–108 (SSSSVGSSEHSSARSSP) are enriched in low complexity. Composition is skewed to basic and acidic residues over residues 126–135 (PATKTEKKAE) and 149–176 (KLEEHENDTNKVEKVVDSAPEPKPKKEP).

It belongs to the fungal TPase family. As to quaternary structure, heterodimer. The mRNA-capping enzyme is composed of two separate chains alpha and beta, respectively a mRNA guanylyltransferase and an mRNA 5'-triphosphate monophosphatase. Mg(2+) serves as cofactor.

The protein localises to the nucleus. The enzyme catalyses a 5'-end triphospho-ribonucleoside in mRNA + H2O = a 5'-end diphospho-ribonucleoside in mRNA + phosphate + H(+). In terms of biological role, first step of mRNA capping. Converts the 5'-triphosphate end of a nascent mRNA chain into a diphosphate end. The sequence is that of mRNA-capping enzyme subunit beta (CET1) from Candida albicans (strain SC5314 / ATCC MYA-2876) (Yeast).